A 335-amino-acid polypeptide reads, in one-letter code: Erlin-2 (335 aa).

Over 1–2 the chain is Cytoplasmic; that stretch reads MS. The chain crosses the membrane as a helical span at residues 3–23; it reads HAGAIAAIGVALIAAALFSAI. Residues 24 to 335 lie on the Lumenal side of the membrane; it reads HKIEEGHVGV…ALNEPAVGDE (312 aa). Asparagine 106 carries an N-linked (GlcNAc...) asparagine glycan. The span at 310–321 shows a compositional bias: polar residues; it reads AGPSVQSATLLQ. Residues 310-335 are disordered; it reads AGPSVQSATLLQDDSPALNEPAVGDE.

Belongs to the band 7/mec-2 family.

The protein localises to the endoplasmic reticulum membrane. Mediates the endoplasmic reticulum-associated degradation (ERAD) of inositol 1,4,5-trisphosphate receptors (IP3Rs). Promotes sterol-accelerated ERAD of HMGCR. Involved in regulation of cellular cholesterol homeostasis by regulation the SREBP signaling pathway. The sequence is that of Erlin-2 (erlin2) from Xenopus tropicalis (Western clawed frog).